The chain runs to 417 residues: Gamma-glutamyl phosphate reductase (417 aa).

Belongs to the gamma-glutamyl phosphate reductase family.

It is found in the cytoplasm. The catalysed reaction is L-glutamate 5-semialdehyde + phosphate + NADP(+) = L-glutamyl 5-phosphate + NADPH + H(+). It functions in the pathway amino-acid biosynthesis; L-proline biosynthesis; L-glutamate 5-semialdehyde from L-glutamate: step 2/2. In terms of biological role, catalyzes the NADPH-dependent reduction of L-glutamate 5-phosphate into L-glutamate 5-semialdehyde and phosphate. The product spontaneously undergoes cyclization to form 1-pyrroline-5-carboxylate. This is Gamma-glutamyl phosphate reductase from Streptococcus agalactiae serotype III (strain NEM316).